A 357-amino-acid chain; its full sequence is Peptide chain release factor 1 (357 aa).

Gln233 is subject to N5-methylglutamine.

This sequence belongs to the prokaryotic/mitochondrial release factor family. Post-translationally, methylated by PrmC. Methylation increases the termination efficiency of RF1.

It localises to the cytoplasm. Peptide chain release factor 1 directs the termination of translation in response to the peptide chain termination codons UAG and UAA. The chain is Peptide chain release factor 1 from Flavobacterium psychrophilum (strain ATCC 49511 / DSM 21280 / CIP 103535 / JIP02/86).